Consider the following 393-residue polypeptide: Dihydrolipoyllysine-residue succinyltransferase component of 2-oxoglutarate dehydrogenase complex (393 aa).

A Lipoyl-binding domain is found at Arg3 to Val78. An N6-lipoyllysine modification is found at Lys44. Active-site residues include His364 and Asp368.

This sequence belongs to the 2-oxoacid dehydrogenase family. In terms of assembly, forms a 24-polypeptide structural core with octahedral symmetry. Part of the 2-oxoglutarate dehydrogenase (OGDH) complex composed of E1 (2-oxoglutarate dehydrogenase), E2 (dihydrolipoamide succinyltransferase) and E3 (dihydrolipoamide dehydrogenase); the complex contains multiple copies of the three enzymatic components (E1, E2 and E3). The cofactor is (R)-lipoate.

It catalyses the reaction N(6)-[(R)-dihydrolipoyl]-L-lysyl-[protein] + succinyl-CoA = N(6)-[(R)-S(8)-succinyldihydrolipoyl]-L-lysyl-[protein] + CoA. Its pathway is amino-acid degradation; L-lysine degradation via saccharopine pathway; glutaryl-CoA from L-lysine: step 6/6. Functionally, E2 component of the 2-oxoglutarate dehydrogenase (OGDH) complex which catalyzes the second step in the conversion of 2-oxoglutarate to succinyl-CoA and CO(2). This is Dihydrolipoyllysine-residue succinyltransferase component of 2-oxoglutarate dehydrogenase complex (sucB) from Buchnera aphidicola subsp. Schizaphis graminum (strain Sg).